A 277-amino-acid chain; its full sequence is MELIEKHASFGGWQNVYRHYSQSLKCEMNVGVYLPPKAGNEKLPVLYWLSGLTCNEQNFITKSGMQRYAAEHNIIVVAPDTSPRGSHVADADRYDLGQGAGFYLNATQAPWNEHYKMYDYIHNELPDLVMQHFPATTRKSISGHSMGGLGALVLALRNPDEYVSVSAFSPIVSPSQVPWGQQAFAAYLGENKEAWLDYDPVSLISQGQRVAEIMVDQGLSDDFYAEQLRTPNLEKICQEMNIKTLIRYHEGYDHSYYFVSSFIGEHIAYHANKLNMR.

Catalysis depends on charge relay system residues Ser145, Asp221, and His254.

The protein belongs to the esterase D family.

The enzyme catalyses S-formylglutathione + H2O = formate + glutathione + H(+). Functionally, serine hydrolase involved in the detoxification of formaldehyde. Hydrolyzes S-formylglutathione to glutathione and formate. This is S-formylglutathione hydrolase FrmB (frmB) from Escherichia coli (strain SMS-3-5 / SECEC).